The sequence spans 82 residues: Histidine-rich protein (82 aa).

This chain is Histidine-rich protein, found in Plasmodium falciparum (isolate fcm17 / Senegal).